We begin with the raw amino-acid sequence, 34 residues long: Protein HRURF (34 aa).

Its function is as follows. May function as an inhibitory translational control element that can negatively regulate protein translation of HR gene. This is Protein HRURF from Homo sapiens (Human).